The primary structure comprises 746 residues: Polyribonucleotide nucleotidyltransferase (746 aa).

Asp493 and Asp499 together coordinate Mg(2+). Residues 560–619 enclose the KH domain; that stretch reads PRIITLQINPEKIGALIGPGGKTIRSITEATGAQIDIEEDGRVYISTADAAAAQQAVAMV. Residues 629–698 enclose the S1 motif domain; it reads GDIFLGKVVR…GTGKVSLSRR (70 aa). Residues 704–746 form a disordered region; sequence ETAEDRRAAGAGRGLRDGGRSSGSERSGDRSPRSDDRPRPRRR. 2 stretches are compositionally biased toward basic and acidic residues: residues 706 to 722 and 729 to 746; these read AEDRRAAGAGRGLRDGG and RSGDRSPRSDDRPRPRRR.

This sequence belongs to the polyribonucleotide nucleotidyltransferase family. Mg(2+) serves as cofactor.

The protein resides in the cytoplasm. The catalysed reaction is RNA(n+1) + phosphate = RNA(n) + a ribonucleoside 5'-diphosphate. Functionally, involved in mRNA degradation. Catalyzes the phosphorolysis of single-stranded polyribonucleotides processively in the 3'- to 5'-direction. The polypeptide is Polyribonucleotide nucleotidyltransferase (Roseiflexus castenholzii (strain DSM 13941 / HLO8)).